Here is a 345-residue protein sequence, read N- to C-terminus: Protein-glutamate methylesterase/protein-glutamine glutaminase 1 (345 aa).

The Response regulatory domain occupies 8–123 (SVLVIDDSAH…FEAMEALRVE (116 aa)). Aspartate 59 carries the post-translational modification 4-aspartylphosphate. A CheB-type methylesterase domain is found at 151–344 (AGEPPLVVAV…PALAALARRR (194 aa)). Catalysis depends on residues serine 163, histidine 190, and aspartate 286.

It belongs to the CheB family. Phosphorylated by CheA. Phosphorylation of the N-terminal regulatory domain activates the methylesterase activity.

Its subcellular location is the cytoplasm. It catalyses the reaction [protein]-L-glutamate 5-O-methyl ester + H2O = L-glutamyl-[protein] + methanol + H(+). It carries out the reaction L-glutaminyl-[protein] + H2O = L-glutamyl-[protein] + NH4(+). Its function is as follows. Involved in chemotaxis. Part of a chemotaxis signal transduction system that modulates chemotaxis in response to various stimuli. Catalyzes the demethylation of specific methylglutamate residues introduced into the chemoreceptors (methyl-accepting chemotaxis proteins or MCP) by CheR. Also mediates the irreversible deamidation of specific glutamine residues to glutamic acid. The sequence is that of Protein-glutamate methylesterase/protein-glutamine glutaminase 1 from Myxococcus xanthus (strain DK1622).